The following is a 256-amino-acid chain: Thiazole synthase (256 aa).

The active-site Schiff-base intermediate with DXP is Lys-91. Residues Gly-152, 179-180 (AG), and 201-202 (NT) contribute to the 1-deoxy-D-xylulose 5-phosphate site.

The protein belongs to the ThiG family. As to quaternary structure, homotetramer. Forms heterodimers with either ThiH or ThiS.

The protein localises to the cytoplasm. It catalyses the reaction [ThiS sulfur-carrier protein]-C-terminal-Gly-aminoethanethioate + 2-iminoacetate + 1-deoxy-D-xylulose 5-phosphate = [ThiS sulfur-carrier protein]-C-terminal Gly-Gly + 2-[(2R,5Z)-2-carboxy-4-methylthiazol-5(2H)-ylidene]ethyl phosphate + 2 H2O + H(+). It functions in the pathway cofactor biosynthesis; thiamine diphosphate biosynthesis. Its function is as follows. Catalyzes the rearrangement of 1-deoxy-D-xylulose 5-phosphate (DXP) to produce the thiazole phosphate moiety of thiamine. Sulfur is provided by the thiocarboxylate moiety of the carrier protein ThiS. In vitro, sulfur can be provided by H(2)S. This Erwinia tasmaniensis (strain DSM 17950 / CFBP 7177 / CIP 109463 / NCPPB 4357 / Et1/99) protein is Thiazole synthase.